A 670-amino-acid chain; its full sequence is Methionine--tRNA ligase (670 aa).

Residues 14–24 carry the 'HIGH' region motif; it reads PYANGHLHLGH. Positions 145, 148, 158, and 161 each coordinate Zn(2+). Positions 330–334 match the 'KMSKS' region motif; that stretch reads KMSKS. K333 contributes to the ATP binding site. In terms of domain architecture, tRNA-binding spans 570–670; it reads DFAKVDLRIA…AGAFPGMKVK (101 aa).

Belongs to the class-I aminoacyl-tRNA synthetase family. MetG type 1 subfamily. As to quaternary structure, homodimer. Requires Zn(2+) as cofactor.

It is found in the cytoplasm. The enzyme catalyses tRNA(Met) + L-methionine + ATP = L-methionyl-tRNA(Met) + AMP + diphosphate. Its function is as follows. Is required not only for elongation of protein synthesis but also for the initiation of all mRNA translation through initiator tRNA(fMet) aminoacylation. In Legionella pneumophila (strain Corby), this protein is Methionine--tRNA ligase.